Consider the following 992-residue polypeptide: Meckelin (992 aa).

The first 36 residues, 1-36 (MVTRTRPVAAMAVRSRSSSRTGTAYLLLVLCEVSWA), serve as a signal peptide directing secretion. Residues 37–280 (QIFSFPFRRP…FHYIFESTAG (244 aa)) are cysteine-rich. The Extracellular segment spans residues 37 to 516 (QIFSFPFRRP…SVKYEMNQGD (480 aa)). 12 disulfides stabilise this stretch: Cys49–Cys62, Cys65–Cys78, Cys80–Cys97, Cys100–Cys114, Cys117–Cys127, Cys129–Cys150, Cys153–Cys170, Cys173–Cys184, Cys186–Cys197, Cys237–Cys246, Cys253–Cys268, and Cys354–Cys375. N-linked (GlcNAc...) asparagine glycosylation occurs at Asn242. Residues 517 to 545 (ASVHTDIALGVLGGLAVLSSLLKTAGWKR) traverse the membrane as a helical segment. The Cytoplasmic portion of the chain corresponds to 546–555 (RVGSPMIDLQ). A helical transmembrane segment spans residues 556-587 (TVMKFLLYYAGDLANVFFIITVGTGLYWLIFF). Topologically, residues 588–600 (KAQKSVSVLLPMP) are extracellular. The helical transmembrane segment at 601–628 (VQEERFVTYVGCAFAMKALQFLHKFISQ) threads the bilayer. Residues 629 to 667 (ISIDIFFIDWERPKGKVLKAVEGEGGVRSATVPVSIWRT) are Cytoplasmic-facing. Residues 668 to 676 (YFVANEWNE) constitute an intramembrane region (helical). The chain crosses the membrane as a discontinuously helical span at residues 668–698 (YFVANEWNEIQTVRKINPLFQVLTTLFFLEV). An intramembrane segment occupies 677-685 (IQTVRKINP). Positions 686-698 (LFQVLTTLFFLEV) form an intramembrane region, helical. The Extracellular segment spans residues 699-728 (VGFKNLALMDSSSSLSRNPSDYTAPYSRIL). The segment at residues 729-754 (RYAVATAIWLVIGIIQVVFFAAFYER) is an intramembrane region (helical). A discontinuously helical transmembrane segment spans residues 729–768 (RYAVATAIWLVIGIIQVVFFAAFYERFIEDKIRQFVDLCS). The stretch at 755–759 (FIEDK) is an intramembrane region. An intramembrane region (helical) is located at residues 760-768 (IRQFVDLCS). The Cytoplasmic segment spans residues 769 to 923 (MSNVSVFLLS…SIFYNDEGHS (155 aa)). The helical intramembrane region spans 924–926 (FSS). A discontinuously helical membrane pass occupies residues 924–949 (FSSVLYYGNEATLLIFDLLFFCVVDL). The stretch at 927 to 933 (VLYYGNE) is an intramembrane region. The segment at residues 934–949 (ATLLIFDLLFFCVVDL) is an intramembrane region (helical). At 950–954 (ACQDF) the chain is on the extracellular side. Residues 955–982 (VLASFLTYLQQEIFRFIRNTVGQKNLAT) form a helical membrane-spanning segment. Over 983-992 (KTLVDERFLI) the chain is Cytoplasmic.

Homodimer. Part of the tectonic-like complex (also named B9 complex). Interacts with DNAJB9, DNAJC10 and mutated SFTPC. Interacts with SYNE2 during the early establishment of cell polarity. Interacts (via C-terminus) with FLNA. Interacts with TMEM218. Interacts with WNT5A. Interacts with ROR2.

The protein resides in the cell membrane. The protein localises to the endoplasmic reticulum membrane. It localises to the cytoplasm. It is found in the cytoskeleton. Its subcellular location is the cilium basal body. Part of the tectonic-like complex which is required for tissue-specific ciliogenesis and may regulate ciliary membrane composition. Involved in centrosome migration to the apical cell surface during early ciliogenesis. Required for ciliary structure and function, including a role in regulating length and appropriate number through modulating centrosome duplication. Is a key regulator of stereociliary bundle orientation. Required for epithelial cell branching morphology. Essential for endoplasmic reticulum-associated degradation (ERAD) of surfactant protein C (sftpc). Involved in the negative regulation of canonical Wnt signaling, and activation of the non-canonical cascade stimulated by WNT5A. In non-canonical Wnt signaling, it may act as ROR2 coreceptor. The polypeptide is Meckelin (Tmem67) (Mus musculus (Mouse)).